The following is a 340-amino-acid chain: Proline-rich transmembrane protein 2 (340 aa).

A disordered region spans residues 1–261 (MAASSSEISE…AGPGVEGGEG (261 aa)). The Cytoplasmic portion of the chain corresponds to 1 to 268 (MAASSSEISE…GEGTQKPRDY (268 aa)). Basic and acidic residues predominate over residues 9-18 (SEMKGVEESP). At serine 28 the chain carries Phosphoserine. Phosphothreonine is present on threonine 74. 2 stretches are compositionally biased toward pro residues: residues 131–155 (PPEP…PKPA) and 197–207 (APEPHSPPSKK). Serine 238 bears the Phosphoserine mark. Arginine 240 is modified (omega-N-methylarginine). A phosphoserine mark is found at serine 248 and serine 249. Positions 269-289 (IILAILSCFCPMWPVNIVAFA) form an intramembrane region, helical. The Cytoplasmic portion of the chain corresponds to 290 to 317 (YAVMSRNSLQQGDVDGAQRLGRVAKLLS). A helical transmembrane segment spans residues 318–338 (IVALVGGVLIIIASCVINLGV). The Extracellular portion of the chain corresponds to 339–340 (YK).

Belongs to the CD225/Dispanin family. Component of the outer core of AMPAR complex. AMPAR complex consists of an inner core made of 4 pore-forming GluA/GRIA proteins (GRIA1, GRIA2, GRIA3 and GRIA4) and 4 major auxiliary subunits arranged in a twofold symmetry. One of the two pairs of distinct binding sites is occupied either by CNIH2, CNIH3 or CACNG2, CACNG3. The other harbors CACNG2, CACNG3, CACNG4, CACNG8 or GSG1L. This inner core of AMPAR complex is complemented by outer core constituents binding directly to the GluA/GRIA proteins at sites distinct from the interaction sites of the inner core constituents. Outer core constituents include at least PRRT1, PRRT2, CKAMP44/SHISA9, FRRS1L and NRN1. The proteins of the inner and outer core serve as a platform for other, more peripherally associated AMPAR constituents. Alone or in combination, these auxiliary subunits control the gating and pharmacology of the AMPAR complex and profoundly impact their biogenesis and protein processing. Interacts with intersectin 1/ITSN1. Interacts with SNARE complex components, including SNAP25, STX1A, SYT1 and SYT2; this interaction may inhibit SNARE complex formation.

Its subcellular location is the cell membrane. It is found in the presynaptic cell membrane. It localises to the synapse. The protein resides in the cell projection. The protein localises to the axon. Its subcellular location is the cytoplasmic vesicle. It is found in the secretory vesicle. It localises to the synaptic vesicle membrane. The protein resides in the postsynaptic density membrane. The protein localises to the dendritic spine. In terms of biological role, as a component of the outer core of AMPAR complex, may be involved in synaptic transmission in the central nervous system. In hippocampal neurons, in presynaptic terminals, plays an important role in the final steps of neurotransmitter release, possibly by regulating Ca(2+)-sensing. In the cerebellum, may inhibit SNARE complex formation and down-regulate short-term facilitation. This Homo sapiens (Human) protein is Proline-rich transmembrane protein 2 (PRRT2).